The primary structure comprises 221 residues: MASTKPLSRFWEWGKNIVCVGRNYADHVKEMRSTVLSEPVLFLKPSTAYAPEGSPVLMPAYCRNLHHEVELGVLLGRRGEAVPEAAAMDYVAGYALCLDMTARDVQDECKKKGLPWTLAKSFTSSCPVSAFVPKEKIPDPHALRLWLKVNGELRQEGKTSSMIFSIPYIISYVSKIITLEEGDLILTGTPKGVGAVKENDEIEAGIDGVVSMRFKVERSKY.

The N-terminal 24 residues, 1–24 (MASTKPLSRFWEWGKNIVCVGRNY), are a transit peptide targeting the mitochondrion. At Ser-37 the chain carries Phosphoserine. Residues Glu-68, Glu-70, and Asp-99 each contribute to the Mg(2+) site. Lys-110 is subject to N6-acetyllysine. Position 112 is an N6-succinyllysine (Lys-112).

The protein belongs to the FAH family. In terms of assembly, homodimer. The cofactor is Mg(2+). Requires Mn(2+) as cofactor.

Its subcellular location is the mitochondrion. The protein resides in the cytoplasm. It is found in the cytosol. It carries out the reaction oxaloacetate = enol-oxaloacetate. It catalyses the reaction oxaloacetate + H(+) = pyruvate + CO2. The catalysed reaction is a 3-acylpyruvate + H2O = a carboxylate + pyruvate + H(+). The enzyme catalyses acetylpyruvate + H2O = acetate + pyruvate + H(+). It carries out the reaction 3-fumarylpyruvate + H2O = fumarate + pyruvate + H(+). Its activity is regulated as follows. Oxaloacetate decarboxylation is competitively inhibited by oxalate. Its function is as follows. Tautomerase that converts enol-oxaloacetate, a strong inhibitor of succinate dehydrogenase, to the physiological keto form of oxaloacetate. It is thereby required to maximize aerobic respiration efficiency by preventing succinate dehydrogenase inhibition. Also acts as a weak oxaloacetate decarboxylase (ODx), catalyzing the decarboxylation of oxaloacetate (OAA) to pyruvate and CO(2), and as such is likely a regulatory enzyme in the TCA cycle. Also displays acylpyruvase activity, being able to hydrolyze acetylpyruvate and fumarylpyruvate in vitro. This chain is Oxaloacetate tautomerase FAHD1, mitochondrial, found in Rattus norvegicus (Rat).